A 758-amino-acid chain; its full sequence is Calcium up-regulated protein E (758 aa).

Residues 1 to 22 are disordered; sequence MINIEDISKSSNQSEEKQLKST. 2 Ricin B-type lectin domains span residues 25-145 and 156-288; these read KPKY…WTTF and GYFQ…WIAN.

Belongs to the cup family.

The protein resides in the cytoplasm. Its subcellular location is the membrane. In terms of biological role, may play an important role in stabilizing and/or regulating the cell membrane during Ca(2+) stress or certain stages of development. This Dictyostelium discoideum (Social amoeba) protein is Calcium up-regulated protein E (cupE).